A 152-amino-acid polypeptide reads, in one-letter code: Protein-export protein SecB (152 aa).

This sequence belongs to the SecB family. As to quaternary structure, homotetramer, a dimer of dimers. One homotetramer interacts with 1 SecA dimer.

The protein resides in the cytoplasm. Functionally, one of the proteins required for the normal export of preproteins out of the cell cytoplasm. It is a molecular chaperone that binds to a subset of precursor proteins, maintaining them in a translocation-competent state. It also specifically binds to its receptor SecA. In Rickettsia rickettsii (strain Iowa), this protein is Protein-export protein SecB.